A 293-amino-acid chain; its full sequence is 3-hydroxybutyryl-CoA dehydrogenase (293 aa).

Belongs to the 3-hydroxyacyl-CoA dehydrogenase family.

The catalysed reaction is (3S)-3-hydroxybutanoyl-CoA + NADP(+) = acetoacetyl-CoA + NADPH + H(+). The protein operates within lipid metabolism; butanoate metabolism. The chain is 3-hydroxybutyryl-CoA dehydrogenase (hbdA) from Bradyrhizobium diazoefficiens (strain JCM 10833 / BCRC 13528 / IAM 13628 / NBRC 14792 / USDA 110).